A 273-amino-acid chain; its full sequence is Dermonecrotic toxin LarSicTox-alphaIB1aii (273 aa).

H5 is a catalytic residue. Residues E25 and D27 each coordinate Mg(2+). Residue H41 is the Nucleophile of the active site. Disulfide bonds link C45/C51 and C47/C190. Residue D85 coordinates Mg(2+). The N-linked (GlcNAc...) asparagine glycan is linked to N250.

It belongs to the arthropod phospholipase D family. Class II subfamily. The cofactor is Mg(2+). In terms of tissue distribution, expressed by the venom gland.

Its subcellular location is the secreted. It carries out the reaction an N-(acyl)-sphingosylphosphocholine = an N-(acyl)-sphingosyl-1,3-cyclic phosphate + choline. The catalysed reaction is an N-(acyl)-sphingosylphosphoethanolamine = an N-(acyl)-sphingosyl-1,3-cyclic phosphate + ethanolamine. The enzyme catalyses a 1-acyl-sn-glycero-3-phosphocholine = a 1-acyl-sn-glycero-2,3-cyclic phosphate + choline. It catalyses the reaction a 1-acyl-sn-glycero-3-phosphoethanolamine = a 1-acyl-sn-glycero-2,3-cyclic phosphate + ethanolamine. Functionally, dermonecrotic toxins cleave the phosphodiester linkage between the phosphate and headgroup of certain phospholipids (sphingolipid and lysolipid substrates), forming an alcohol (often choline) and a cyclic phosphate. This toxin acts on sphingomyelin (SM). It may also act on ceramide phosphoethanolamine (CPE), lysophosphatidylcholine (LPC) and lysophosphatidylethanolamine (LPE), but not on lysophosphatidylserine (LPS), and lysophosphatidylglycerol (LPG). It acts by transphosphatidylation, releasing exclusively cyclic phosphate products as second products. Induces dermonecrosis, hemolysis, increased vascular permeability, edema, inflammatory response, and platelet aggregation. This Loxosceles arizonica (Arizona brown spider) protein is Dermonecrotic toxin LarSicTox-alphaIB1aii.